Consider the following 235-residue polypeptide: Small ribosomal subunit protein uS3 (235 aa).

Residues 39–107 (IRTYIENELK…ETHLNIVEVR (69 aa)) enclose the KH type-2 domain. Residues 215–235 (SERRAVEGAGDGGGQRRRENA) form a disordered region.

This sequence belongs to the universal ribosomal protein uS3 family. As to quaternary structure, part of the 30S ribosomal subunit. Forms a tight complex with proteins S10 and S14.

Binds the lower part of the 30S subunit head. Binds mRNA in the 70S ribosome, positioning it for translation. The chain is Small ribosomal subunit protein uS3 from Chelativorans sp. (strain BNC1).